The sequence spans 122 residues: Sperm-egg fusion protein LLCFC1 (122 aa).

The N-terminal stretch at 1 to 28 (MPPLAPQLCRAVFLVPILLLLQVKPLNG) is a signal peptide. The segment at 27–51 (NGSPGPKDGSQTEKTPSADQNQEQF) is disordered. Positions 38 to 49 (TEKTPSADQNQE) are enriched in polar residues.

It localises to the secreted. Its function is as follows. Sperm protein required for fusion of sperm with the egg membrane during fertilization. The chain is Sperm-egg fusion protein LLCFC1 from Homo sapiens (Human).